Reading from the N-terminus, the 578-residue chain is E3 ubiquitin-protein ligase hrd-like protein 1 (578 aa).

A helical transmembrane segment spans residues 32-52; that stretch reads GYLALSLCVAFIASASVFTHF. An N-linked (GlcNAc...) asparagine glycan is attached at asparagine 68. The next 7 helical transmembrane spans lie at 76–96, 101–121, 134–154, 163–183, 202–222, 230–250, and 286–306; these read FGIN…HYIL, LIWV…KLII, VAAR…LSVV, VMPW…QFVT, SFIS…VSRF, PAVL…YILF, and FLSY…SIFF. The segment at 350-388 adopts an RING-type; atypical zinc-finger fold; that stretch reads CIVCWELLGTSRRLPCSHQFHDWCLMWWLAQDSSCPTCR. Residues 447–489 form the CUE domain; it reads QLQSMLETVLEMFPQMSPETILADLRQSGSAQSTIENILEGRM. Asparagine 492 carries N-linked (GlcNAc...) asparagine glycosylation.

It localises to the membrane. Functionally, proposed to have a role in neuroprotection. The sequence is that of E3 ubiquitin-protein ligase hrd-like protein 1 from Caenorhabditis briggsae.